A 1003-amino-acid polypeptide reads, in one-letter code: Helicase-like transcription factor (1003 aa).

Arg-27 bears the Omega-N-methylarginine mark. The segment at 38–287 (EFQDIIPPDD…FSVKERPENV (250 aa)) is DNA-binding. Residue Lys-112 forms a Glycyl lysine isopeptide (Lys-Gly) (interchain with G-Cter in SUMO2) linkage. Residue Tyr-195 is modified to Phosphotyrosine; by JAK2. Lys-211 is covalently cross-linked (Glycyl lysine isopeptide (Lys-Gly) (interchain with G-Cter in SUMO2)). 294–301 (DDMGLGKT) is an ATP binding site. The disordered stretch occupies residues 317 to 373 (PLLSKRGKKNHPGKEYKDETIKRRGSNMDKKEDGHSESSTCGEEPSISGTPEKSSCT). Over residues 328-352 (PGKEYKDETIKRRGSNMDKKEDGHS) the composition is skewed to basic and acidic residues. Polar residues predominate over residues 353–373 (ESSTCGEEPSISGTPEKSSCT). Phosphoserine is present on residues Ser-394, Ser-395, and Ser-397. The Helicase ATP-binding domain occupies 433-600 (DSKFALTFFA…WSLLSFLKLK (168 aa)). The DEGH box signature appears at 551 to 554 (DEGH). Thr-730 is modified (phosphothreonine). An RING-type zinc finger spans residues 754 to 795 (CAICLDSLTFPVITHCAHVFCKPCICQVIHSEQPHAKCPLCR). In terms of domain architecture, Helicase C-terminal spans 831 to 990 (ALMHALIELR…TKKTDANDMK (160 aa)). Residues 919 to 1003 (SRVFLMDPAW…INEIRTLIDL (85 aa)) are interaction with SP1 and SP3.

It belongs to the SNF2/RAD54 helicase family. RAD16 subfamily. In terms of assembly, interacts with SP1 and SP3 independently of DNA; the interaction with these transcriptional factors may be required for basal transcription of target genes. Interacts with EGR1; the interaction requires prior binding to DNA and represses c-Rel via a DNA looping mechanism. Interacts with GATA4. Interacts with PCNA; the interaction promotes polyubiquitination of PCNA through association with the UBE2B-RAD18 and UBE2V2-UBE2N ubiquitin ligase complexes. Interacts with RAD18, SHPRH, UBE2V2 and UBE2N. Expressed in brain, heart, kidney, liver, lung, pancreas, placenta and skeletal muscle.

It is found in the cytoplasm. It localises to the nucleus. The protein localises to the nucleolus. The protein resides in the nucleoplasm. It carries out the reaction S-ubiquitinyl-[E2 ubiquitin-conjugating enzyme]-L-cysteine + [acceptor protein]-L-lysine = [E2 ubiquitin-conjugating enzyme]-L-cysteine + N(6)-ubiquitinyl-[acceptor protein]-L-lysine.. It participates in protein modification; protein ubiquitination. Has both helicase and E3 ubiquitin ligase activities. Possesses intrinsic ATP-dependent nucleosome-remodeling activity. This activity may be required for transcriptional activation or repression of specific target promoters. These may include the SERPINE1, to which this protein can bind directly. Plays a role in error-free postreplication repair (PRR) of damaged DNA and maintains genomic stability through acting as a ubiquitin ligase for 'Lys-63'-linked polyubiquitination of chromatin-bound PCNA. This is Helicase-like transcription factor (Hltf) from Mus musculus (Mouse).